Consider the following 175-residue polypeptide: NADH-quinone oxidoreductase subunit I (175 aa).

2 4Fe-4S ferredoxin-type domains span residues 69-98 (KRDE…IEAG) and 115-144 (KKFE…LDGP). Residues cysteine 78, cysteine 81, cysteine 84, cysteine 88, cysteine 124, cysteine 127, cysteine 130, and cysteine 134 each coordinate [4Fe-4S] cluster.

Belongs to the complex I 23 kDa subunit family. As to quaternary structure, NDH-1 is composed of 14 different subunits. Subunits NuoA, H, J, K, L, M, N constitute the membrane sector of the complex. The cofactor is [4Fe-4S] cluster.

Its subcellular location is the cell inner membrane. The catalysed reaction is a quinone + NADH + 5 H(+)(in) = a quinol + NAD(+) + 4 H(+)(out). Functionally, NDH-1 shuttles electrons from NADH, via FMN and iron-sulfur (Fe-S) centers, to quinones in the respiratory chain. The immediate electron acceptor for the enzyme in this species is believed to be ubiquinone. Couples the redox reaction to proton translocation (for every two electrons transferred, four hydrogen ions are translocated across the cytoplasmic membrane), and thus conserves the redox energy in a proton gradient. This chain is NADH-quinone oxidoreductase subunit I, found in Leptospira borgpetersenii serovar Hardjo-bovis (strain JB197).